The primary structure comprises 481 residues: Ribosomal protein uS12 methylthiotransferase RimO (481 aa).

The region spanning 8–124 is the MTTase N-terminal domain; the sequence is MTVHLVSMGC…IAGRLRTILD (117 aa). Residues Cys-17, Cys-53, and Cys-87 each contribute to the [4Fe-4S] cluster site. Residues 148–188 are disordered; it reads PTARAEVSVPGHGTAPDLSASVTPDSGPRATRRRLGTGPSA. One can recognise a Radical SAM core domain in the interval 182–413; it reads LGTGPSAPLK…DLTDELVSQR (232 aa). The [4Fe-4S] cluster site is built by Cys-196, Cys-200, and Cys-203. Positions 415-480 constitute a TRAM domain; sequence EDRIGTRGRV…GVDLVARPAN (66 aa).

It belongs to the methylthiotransferase family. RimO subfamily. The cofactor is [4Fe-4S] cluster.

The protein resides in the cytoplasm. The enzyme catalyses L-aspartate(89)-[ribosomal protein uS12]-hydrogen + (sulfur carrier)-SH + AH2 + 2 S-adenosyl-L-methionine = 3-methylsulfanyl-L-aspartate(89)-[ribosomal protein uS12]-hydrogen + (sulfur carrier)-H + 5'-deoxyadenosine + L-methionine + A + S-adenosyl-L-homocysteine + 2 H(+). Its function is as follows. Catalyzes the methylthiolation of an aspartic acid residue of ribosomal protein uS12. This Cutibacterium acnes (strain DSM 16379 / KPA171202) (Propionibacterium acnes) protein is Ribosomal protein uS12 methylthiotransferase RimO.